Consider the following 112-residue polypeptide: Cytochrome c3 (112 aa).

Residues H26, H29, C34, C37, H38, H39, C49, C54, H55, H73, C83, C86, H87, C104, C109, and H110 each contribute to the heme c site.

The cofactor is heme.

In terms of biological role, participates in sulfate respiration coupled with phosphorylation by transferring electrons from the enzyme dehydrogenase to ferredoxin. This Megalodesulfovibrio gigas (strain ATCC 19364 / DSM 1382 / NCIMB 9332 / VKM B-1759) (Desulfovibrio gigas) protein is Cytochrome c3.